Reading from the N-terminus, the 263-residue chain is tRNA (guanine-N(1)-)-methyltransferase (263 aa).

S-adenosyl-L-methionine contacts are provided by residues G113 and 137–142 (LGDYVL).

The protein belongs to the RNA methyltransferase TrmD family. In terms of assembly, homodimer.

Its subcellular location is the cytoplasm. It carries out the reaction guanosine(37) in tRNA + S-adenosyl-L-methionine = N(1)-methylguanosine(37) in tRNA + S-adenosyl-L-homocysteine + H(+). Functionally, specifically methylates guanosine-37 in various tRNAs. In Renibacterium salmoninarum (strain ATCC 33209 / DSM 20767 / JCM 11484 / NBRC 15589 / NCIMB 2235), this protein is tRNA (guanine-N(1)-)-methyltransferase.